The primary structure comprises 878 residues: MEVKGPSGRSFCCESEGQFKSCLKRHTPSLLLPSSWKGNSGSCLMAEALHRTSPTPNSCPLPLPLCRMSGVLCSRNLFTFKFSLFQLDSGASGEPGHSLGLTLGFSYCGNCQTAVVSAQPEGMASNGAYPVLGPGVTANPGTSLSVFTALPFTTPAPGPAHGPLLVTAGAPPGGPLVLSTFPSTPLVTEQDGCSPSGAGASNVFVQMRTEVGPVKAAQAQTLVLTQAPLVWQAPGALCGGVVCPPPLLLAAAPVVPVMAAQVVGGTQACEGGWSQGLPLPPPPPPAAQLPPIVSQGNAGPWPQGAHGESSLASSQAKAPPDDSCNPRSVYENFRLWQHYKPLARRHLPQSPDTEALSCFLIPVLRSLARRKPTMTLEEGLWRAMREWQHTSNFDRMIFYEMAEKFLEFEAEEEMQIQKSQWMKGPQCLPPPATPRLEPRGPPAPEVVKQPVYLPSKAGPKAQTACLPPPRPQRPVTKARRPPPQPHRRAETKARLPPPRPQRPAETKVPEEIPPEVVQEYVDIMEELLGPSLGATGEPEKQREEGKVKQPQEEDWTPPDPGLLSYIDKLCSQKDFVTKVEAVIHPQFLEELLSPDPQMDFLALSQDLEQEEGLTLAQLVEKRLPPLKEKQHSRAAPSRGTARLDSSSSKFAAGQGAERDVPDPQEGVGMETCPPQTTARDSQGRGRAHTGMARSEDSVVLLGCQDSPGLRAARPTSPPQDHRPTCPGVGTKDALDLPGGSPVRESHGLAQGSSEEEELPSLAFLLGSQHKLLPWWLPQSPVPASGLLSPEKWGPQGTHQSPSAERRGLNLAPSPANKAKKQPLFGSLSPAEKTPHRGPGLRVSGEQSLTWGLGGPSQSQKRKGDPLVSRKEKKQHCSQ.

Disordered regions lie at residues 273 to 324 (WSQG…DDSC), 417 to 511 (QKSQ…VPEE), 527 to 560 (LLGP…PPDP), 622 to 757 (RLPP…EEEE), and 775 to 878 (WLPQ…HCSQ). Composition is skewed to pro residues over residues 278–288 (PLPPPPPPAAQ) and 427–444 (CLPP…PPAP). 2 stretches are compositionally biased toward basic and acidic residues: residues 537 to 551 (EPEK…KQPQ) and 622 to 631 (RLPPLKEKQH).

This sequence belongs to the NUT family.

This Homo sapiens (Human) protein is NUT family member 2E (NUTM2E).